Here is a 504-residue protein sequence, read N- to C-terminus: Probable GTP-binding protein OBGC2 (504 aa).

Basic and acidic residues predominate over residues 24 to 39 (AHRDARPALRLPELHA). 2 disordered regions span residues 24 to 46 (AHRD…RRNN) and 93 to 122 (VLAM…GVKK). An Obg domain is found at 73–276 (HKYFDHAVVT…VSLELILRVV (204 aa)). Residues 107–122 (SPRRRSDKGKRSGVKK) show a composition bias toward basic residues. Residues 277–494 (ADVGLVGLPN…MLKEIRAALR (218 aa)) enclose the OBG-type G domain. Residues 283–290 (GLPNAGKS) and 337–341 (DLPGL) contribute to the GTP site. Polar residues predominate over residues 436–452 (SEDSLNGNTGEHNTSSE). The disordered stretch occupies residues 436–463 (SEDSLNGNTGEHNTSSETKVEGGEKELR). The span at 453-463 (TKVEGGEKELR) shows a compositional bias: basic and acidic residues.

The protein belongs to the TRAFAC class OBG-HflX-like GTPase superfamily. OBG GTPase family.

In terms of biological role, may bind GTP and have GTPase activity. The protein is Probable GTP-binding protein OBGC2 of Oryza sativa subsp. japonica (Rice).